The primary structure comprises 481 residues: Protein hedgehog (481 aa).

Cys93 carries N-palmitoyl cysteine lipidation. Ca(2+)-binding residues include Glu157, Glu158, Asp163, Thr193, Glu194, Asp197, and Asp199. Gly265 carries Cholesterol glycine ester lipidation.

Belongs to the hedgehog family. Interacts with shf. In terms of processing, the C-terminal part of the hedgehog protein precursor displays an autoproteolysis activity that results in the cleavage of the full-length protein into two parts (N-product and C-product). In addition, the C-terminal part displays a cholesterol transferase activity that results by the covalent attachment of a cholesterol moiety to the C-terminal of the newly generated N-product. The N-product is the active species in both local and long-range signaling, whereas the C-product has no signaling activity. Post-translationally, cholesterylation is required for N-product targeting to lipid rafts and multimerization. N-palmitoylation by Rasp of the hedgehog N-product, within the secretory pathway, is required for the embryonic and larval patterning activities of the hedgehog signal.

It localises to the nucleus. The protein resides in the cytoplasm. It is found in the cell membrane. The enzyme catalyses glycyl-L-cysteinyl-[protein] + cholesterol + H(+) = [protein]-C-terminal glycyl cholesterol ester + N-terminal L-cysteinyl-[protein]. Its function is as follows. The C-terminal part of the hedgehog protein precursor displays an autoproteolysis activity that results in the cleavage of the full-length protein into two parts (N-product and C-product). In addition, the C-terminal part displays a cholesterol transferase activity that results by the covalent attachment of a cholesterol moiety to the C-terminal of the newly generated N-product. Once cleaved, the C-product has no signaling activity and diffuses from the cell. In terms of biological role, the dually lipidated hedgehog protein N-product is a morphogen which is essential for a variety of patterning events during development. Establishes the anterior-posterior axis of the embryonic segments and patterns the larval imaginal disks. Binds to the patched (ptc) receptor, which functions in association with smoothened (smo), to activate the transcription of target genes wingless (wg), decapentaplegic (dpp) and ptc. In the absence of hh, ptc represses the constitutive signaling activity of smo through fused (fu). Essential component of a signaling pathway which regulates the Duox-dependent gut immune response to bacterial uracil; required to activate Cad99C-dependent endosome formation, norpA-dependent Ca2+ mobilization and p38 MAPK, which are essential steps in the Duox-dependent production of reactive oxygen species (ROS) in response to intestinal bacterial infection. During photoreceptor differentiation, it up-regulates transcription of Ubr3, which in turn promotes the hh-signaling pathway by mediating the ubiquitination and degradation of cos. The polypeptide is Protein hedgehog (hh-1) (Drosophila pseudoobscura pseudoobscura (Fruit fly)).